Consider the following 475-residue polypeptide: Ankyrin repeat, SAM and basic leucine zipper domain-containing protein 1 (475 aa).

The interval 1–24 is disordered; that stretch reads MAASALRGPPVAGGGESSESEDDG. A phosphoserine mark is found at Ser17, Ser18, and Ser20. ANK repeat units follow at residues 45–74, 78–107, 110–144, 148–177, 181–210, and 214–243; these read EKKE…SVDS, YGWT…NASF, DKQS…DPNV, RLMT…EVNT, NGYT…NKML, and DGKM…PLEG. Residues 272-334 enclose the SAM domain; it reads SYTAFGDLEV…KILAALKELQ (63 aa).

Interacts with DDX4, PIWIL1, RANBP9 and TDRD1.

The protein resides in the cytoplasm. Functionally, plays a central role during spermatogenesis by repressing transposable elements and preventing their mobilization, which is essential for the germline integrity. Acts via the piRNA metabolic process, which mediates the repression of transposable elements during meiosis by forming complexes composed of piRNAs and Piwi proteins and governs the methylation and subsequent repression of transposons. Its association with pi-bodies suggests a participation in the primary piRNAs metabolic process. Required prior to the pachytene stage to facilitate the production of multiple types of piRNAs, including those associated with repeats involved in the regulation of retrotransposons. May act by mediating protein-protein interactions during germ cell maturation. This Gorilla gorilla gorilla (Western lowland gorilla) protein is Ankyrin repeat, SAM and basic leucine zipper domain-containing protein 1 (ASZ1).